Here is a 232-residue protein sequence, read N- to C-terminus: MRILAVIPARAGSKRLPGKNTRLLAGKPLIAHTIVAALQSSCCEEIVVSTDSKQIADVAVQYGASVPWLRSEDLATDTSDVIHTVIDLLFKFQQMDVFFDSVLLLQPTSPFRKPETIRHAVEIHKVTGKSVVSVSPISLKPSWCRSIDSQGNLVKPELFQDLEIYCNENPIYKLNGSIYIATAKQIIENKSFYSEPTKPLLLNSISESIDIDTPIDWALTEKLMELNQEALV.

It belongs to the CMP-NeuNAc synthase family.

It catalyses the reaction N,N-diacetyllegionaminate + CTP = CMP-N,N-diacetyllegionaminate + diphosphate. In terms of biological role, involved in biosynthesis of legionaminic acid (5,7-diamino-3,5,7,9-tetradeoxy-D-glycero-D-galacto-non-2-ulosonic acid)(Leg), a sialic acid-like derivative that is incorporated into virulence-associated cell surface glycoconjugates such as lipopolysaccharide (LPS) which could be a key determinant in the ability of L.pneumophila to inhibit the fusion of phagosomes with lysosomes. LPS contains a majority alpha2,4-linked homomer of legionaminic acid. Catalyzes the conversion of N,N'-diacetyllegionaminic acid (Leg5Ac7Ac) and CTP into CMP-N,N'-diacetyllegionaminic acid (CMP-Leg5Ac7Ac). The sequence is that of CMP-N,N'-diacetyllegionaminic acid synthase (neuA) from Legionella pneumophila subsp. pneumophila (strain Philadelphia 1 / ATCC 33152 / DSM 7513).